A 465-amino-acid polypeptide reads, in one-letter code: Argininosuccinate lyase (465 aa).

This sequence belongs to the lyase 1 family. Argininosuccinate lyase subfamily.

It is found in the cytoplasm. It carries out the reaction 2-(N(omega)-L-arginino)succinate = fumarate + L-arginine. It participates in amino-acid biosynthesis; L-arginine biosynthesis; L-arginine from L-ornithine and carbamoyl phosphate: step 3/3. This chain is Argininosuccinate lyase, found in Aromatoleum aromaticum (strain DSM 19018 / LMG 30748 / EbN1) (Azoarcus sp. (strain EbN1)).